We begin with the raw amino-acid sequence, 409 residues long: Isovaleryl-CoA dehydrogenase, mitochondrial (409 aa).

The N-terminal 22 residues, 1–22 (MQRFFSARSILGYAVKTRRRSF), are a transit peptide targeting the mitochondrion. FAD contacts are provided by residues 151–160 (LAMSEPNAGS) and 184–186 (WCT). Residue S160 participates in substrate binding. Substrate is bound by residues 206 to 207 (SK), Y261, and 268 to 271 (DLER). E270 functions as the Proton acceptor in the catalytic mechanism. Residues R296, Q307, and 364–368 (QCLGG) each bind FAD. Position 391–392 (391–392 (AG)) interacts with substrate. 393–395 (TSE) serves as a coordination point for FAD.

Belongs to the acyl-CoA dehydrogenase family. As to quaternary structure, homodimer. It depends on FAD as a cofactor. As to expression, expressed in leaves, stems and flowers. Not detected in roots.

The protein resides in the mitochondrion. The enzyme catalyses 3-methylbutanoyl-CoA + oxidized [electron-transfer flavoprotein] + H(+) = 3-methylbut-2-enoyl-CoA + reduced [electron-transfer flavoprotein]. It participates in amino-acid degradation; L-leucine degradation; (S)-3-hydroxy-3-methylglutaryl-CoA from 3-isovaleryl-CoA: step 1/3. Involved in degradation of the branched-chain amino acids, phytol and lysine for the supply of carbon and electrons to the ETF/ETFQO complex during dark-induced sugar starvation. The sequence is that of Isovaleryl-CoA dehydrogenase, mitochondrial (IVD) from Arabidopsis thaliana (Mouse-ear cress).